The following is a 343-amino-acid chain: MSNANNSAMNHITLPPISSFDNLIKAAERQYNGEASSASTHPTLPNMNISNGSGSAGASSSMLSYQLLPHSNDVSRSNSSSSFLPSVQQPTEGSASASETSSSASPSRSISPILKVAGPSSVGGAGVSTPHSTKINKPRKKKQCPICRNFYANLTTHKATHLTPEDRPHKCPICHRGFARNNDLLRHKKRHWKDEILSQSGVLSNHNDGKGGSVSPNDDDTHEKMTPMNSVTDYAQLKSLHQIKGTFKCPFNSTLIQLDMDMYPYKLKPLNFETSNCHQTGVFSRCDTFKNHLKALHFEYPPGTKKKDRNVVPGRCKHCGLKFENVDVWLNEHVGKQCGYKYH.

Disordered regions lie at residues 31–56 (YNGE…SGSA) and 71–140 (SNDV…KPRK). Residues 33-45 (GEASSASTHPTLP) are compositionally biased toward polar residues. Composition is skewed to low complexity over residues 46 to 56 (NMNISNGSGSA), 71 to 86 (SNDV…FLPS), and 94 to 120 (SASA…AGPS). Phosphoserine is present on residues serine 71 and serine 111. The C2H2-type zinc finger occupies 169–191 (HKCPICHRGFARNNDLLRHKKRH). The tract at residues 198–222 (SQSGVLSNHNDGKGGSVSPNDDDTH) is disordered.

The protein resides in the nucleus. This chain is Zinc finger protein STP3 (STP3), found in Saccharomyces cerevisiae (strain ATCC 204508 / S288c) (Baker's yeast).